The following is a 146-amino-acid chain: D-aminoacyl-tRNA deacylase (146 aa).

The Gly-cisPro motif, important for rejection of L-amino acids motif lies at 137 to 138 (GP).

The protein belongs to the DTD family. Homodimer.

It localises to the cytoplasm. It carries out the reaction glycyl-tRNA(Ala) + H2O = tRNA(Ala) + glycine + H(+). It catalyses the reaction a D-aminoacyl-tRNA + H2O = a tRNA + a D-alpha-amino acid + H(+). In terms of biological role, an aminoacyl-tRNA editing enzyme that deacylates mischarged D-aminoacyl-tRNAs. Also deacylates mischarged glycyl-tRNA(Ala), protecting cells against glycine mischarging by AlaRS. Acts via tRNA-based rather than protein-based catalysis; rejects L-amino acids rather than detecting D-amino acids in the active site. By recycling D-aminoacyl-tRNA to D-amino acids and free tRNA molecules, this enzyme counteracts the toxicity associated with the formation of D-aminoacyl-tRNA entities in vivo and helps enforce protein L-homochirality. This chain is D-aminoacyl-tRNA deacylase, found in Bacillus mycoides (strain KBAB4) (Bacillus weihenstephanensis).